Reading from the N-terminus, the 241-residue chain is UPF0173 metal-dependent hydrolase Haur_4333 (241 aa).

It belongs to the UPF0173 family.

The protein is UPF0173 metal-dependent hydrolase Haur_4333 of Herpetosiphon aurantiacus (strain ATCC 23779 / DSM 785 / 114-95).